The primary structure comprises 278 residues: Large ribosomal subunit protein uL2 (278 aa).

Residues 222-264 (RGVAMNPVDHPHGGGEGRTSGGRNPVTPWGVPTKGKKTRSNKR) are disordered.

This sequence belongs to the universal ribosomal protein uL2 family. In terms of assembly, part of the 50S ribosomal subunit. Forms a bridge to the 30S subunit in the 70S ribosome.

Functionally, one of the primary rRNA binding proteins. Required for association of the 30S and 50S subunits to form the 70S ribosome, for tRNA binding and peptide bond formation. It has been suggested to have peptidyltransferase activity; this is somewhat controversial. Makes several contacts with the 16S rRNA in the 70S ribosome. The sequence is that of Large ribosomal subunit protein uL2 from Methylobacterium radiotolerans (strain ATCC 27329 / DSM 1819 / JCM 2831 / NBRC 15690 / NCIMB 10815 / 0-1).